The chain runs to 988 residues: UvrABC system protein A (988 aa).

33-40 provides a ligand contact to ATP; the sequence is GLSGSGKS. The C4-type zinc finger occupies 255-282; the sequence is CPVCDYSLPELEPRLFSFNAPVGACPSC. 2 consecutive ABC transporter domains span residues 312-589 and 609-938; these read WDRR…PRSL and PNPK…QFLA. An ATP-binding site is contributed by 642 to 649; the sequence is GVSGSGKS. Residues 741 to 767 form a C4-type zinc finger; that stretch reads CEACQGDGMIKVEMHFLPDVYVPCDVC. Residues 948–988 are disordered; it reads ETRPAAMANKPDARPPRKVKPEKVAKATKTATKKTAKKKAS. Positions 958–972 are enriched in basic and acidic residues; sequence PDARPPRKVKPEKVA. Basic residues predominate over residues 978-988; it reads ATKKTAKKKAS.

Belongs to the ABC transporter superfamily. UvrA family. Forms a heterotetramer with UvrB during the search for lesions.

It is found in the cytoplasm. Its function is as follows. The UvrABC repair system catalyzes the recognition and processing of DNA lesions. UvrA is an ATPase and a DNA-binding protein. A damage recognition complex composed of 2 UvrA and 2 UvrB subunits scans DNA for abnormalities. When the presence of a lesion has been verified by UvrB, the UvrA molecules dissociate. The protein is UvrABC system protein A of Xanthomonas campestris pv. campestris (strain ATCC 33913 / DSM 3586 / NCPPB 528 / LMG 568 / P 25).